A 455-amino-acid chain; its full sequence is Membrane protein Pbs54 (455 aa).

A helical membrane pass occupies residues 12–32 (IISIIILILRISLFSCAEHLF). N-linked (GlcNAc...) asparagine glycans are attached at residues asparagine 41, asparagine 102, and asparagine 125. Transmembrane regions (helical) follow at residues 181 to 201 (IFLI…LFNG), 220 to 240 (FIFF…LSCI), 244 to 264 (ILTF…FYLF), 285 to 305 (ILIG…IIFI), 312 to 332 (FLVK…IFFL), and 346 to 366 (FVFS…FWNI). An N-linked (GlcNAc...) asparagine glycan is attached at asparagine 373. Residues 398–418 (NMFALFMIFAMSILSIIFPRI) form a helical membrane-spanning segment.

It localises to the cell projection. It is found in the cilium. The protein resides in the flagellum. Its subcellular location is the cell membrane. Functionally, plays a role in gamete fertilization. Required for the successful transmission of parasites to mosquito. This chain is Membrane protein Pbs54, found in Plasmodium berghei (strain Anka).